Reading from the N-terminus, the 78-residue chain is Exodeoxyribonuclease 7 small subunit (78 aa).

This sequence belongs to the XseB family. In terms of assembly, heterooligomer composed of large and small subunits.

It localises to the cytoplasm. It catalyses the reaction Exonucleolytic cleavage in either 5'- to 3'- or 3'- to 5'-direction to yield nucleoside 5'-phosphates.. Its function is as follows. Bidirectionally degrades single-stranded DNA into large acid-insoluble oligonucleotides, which are then degraded further into small acid-soluble oligonucleotides. This Psychromonas ingrahamii (strain DSM 17664 / CCUG 51855 / 37) protein is Exodeoxyribonuclease 7 small subunit.